Here is a 131-residue protein sequence, read N- to C-terminus: MSWQTYVDNHLLCEIEGDHLSSAAILGQDGGVWAQSSHFPQFKPEEITAIMNDFAEPGSLAPTGLYLGGTKYMVIQGEPGAIIPGKKGPGGVTIEKTNQALIIGIYDKPMTPGQCNMIVERLGDYLIDTGL.

This sequence belongs to the profilin family. Occurs in many kinds of cells as a complex with monomeric actin in a 1:1 ratio.

The protein localises to the cytoplasm. It localises to the cytoskeleton. Binds to actin and affects the structure of the cytoskeleton. At high concentrations, profilin prevents the polymerization of actin, whereas it enhances it at low concentrations. By binding to PIP2, it inhibits the formation of IP3 and DG. The protein is Profilin of Arachis hypogaea (Peanut).